A 339-amino-acid polypeptide reads, in one-letter code: UDP-N-acetylenolpyruvoylglucosamine reductase (339 aa).

The region spanning 16-188 (GIAATARYYS…LQVTLRLNKQ (173 aa)) is the FAD-binding PCMH-type domain. The active site involves arginine 164. The active-site Proton donor is serine 238. Glutamate 334 is an active-site residue.

It belongs to the MurB family. FAD is required as a cofactor.

It is found in the cytoplasm. It catalyses the reaction UDP-N-acetyl-alpha-D-muramate + NADP(+) = UDP-N-acetyl-3-O-(1-carboxyvinyl)-alpha-D-glucosamine + NADPH + H(+). Its pathway is cell wall biogenesis; peptidoglycan biosynthesis. Cell wall formation. This Amoebophilus asiaticus (strain 5a2) protein is UDP-N-acetylenolpyruvoylglucosamine reductase.